We begin with the raw amino-acid sequence, 236 residues long: Small ribosomal subunit protein uS2c (236 aa).

This sequence belongs to the universal ribosomal protein uS2 family.

It localises to the plastid. Its subcellular location is the chloroplast. In Acorus calamus var. americanus (American sweet flag), this protein is Small ribosomal subunit protein uS2c (rps2).